The sequence spans 269 residues: Shikimate dehydrogenase (NADP(+)) (269 aa).

Residues 17 to 19 and T64 contribute to the shikimate site; that span reads SKS. The active-site Proton acceptor is K68. Position 80 (E80) interacts with NADP(+). 2 residues coordinate shikimate: N89 and D105. Residues 130-134, 154-159, and M213 each bind NADP(+); these read GAGGA and NRTHAK. Y215 is a binding site for shikimate. G237 is an NADP(+) binding site.

It belongs to the shikimate dehydrogenase family. Homodimer.

It carries out the reaction shikimate + NADP(+) = 3-dehydroshikimate + NADPH + H(+). It functions in the pathway metabolic intermediate biosynthesis; chorismate biosynthesis; chorismate from D-erythrose 4-phosphate and phosphoenolpyruvate: step 4/7. Its function is as follows. Involved in the biosynthesis of the chorismate, which leads to the biosynthesis of aromatic amino acids. Catalyzes the reversible NADPH linked reduction of 3-dehydroshikimate (DHSA) to yield shikimate (SA). This is Shikimate dehydrogenase (NADP(+)) from Neisseria flavescens.